A 316-amino-acid chain; its full sequence is Pantothenate kinase (316 aa).

95–102 is an ATP binding site; it reads GSVAVGKS.

The protein belongs to the prokaryotic pantothenate kinase family.

The protein resides in the cytoplasm. The enzyme catalyses (R)-pantothenate + ATP = (R)-4'-phosphopantothenate + ADP + H(+). It functions in the pathway cofactor biosynthesis; coenzyme A biosynthesis; CoA from (R)-pantothenate: step 1/5. This is Pantothenate kinase from Salmonella choleraesuis (strain SC-B67).